Here is a 406-residue protein sequence, read N- to C-terminus: MAIEQTAITRATFDEVILPIYAPAEFIPVKGQGSRIWDQQGKEYVDFAGGIAVTALGHCHPALVNALKTQGETLWHISNVFTNEPALRLGRKLIEATFAERVVFMNSGTEANETAFKLARHYACVRHSPFKTKIIAFHNAFHGRSLFTVSVGGQPKYSDGFGPKPSDIIHVPFNDLHAVKAVMDDHTCAVVVEPIQGEGGVTAATPEFLQGLRELCDQHQALLVFDEVQCGMGRTGDLFAYMHYGVTPDILTSAKALGGGFPISAMLTTAEIASAFHPGSHGSTYGGNPLACAVAGAAFDIINTPEVLEGIQAKRQRFVDHLQKIDQQYDVFSDIRGMGLLIGAELKPQYKGQARDFLYAGAEAGVMVLNAGPDVMRFAPSLVVEDADIDEGMQRFAHAVAKVVGA.

Residues 108 to 109 (GT) and Phe141 contribute to the pyridoxal 5'-phosphate site. Arg144 contributes to the N(2)-acetyl-L-ornithine binding site. Pyridoxal 5'-phosphate is bound at residue 226–229 (DEVQ). Position 255 is an N6-(pyridoxal phosphate)lysine (Lys255). Position 283 (Ser283) interacts with N(2)-acetyl-L-ornithine. Pyridoxal 5'-phosphate is bound at residue Thr284.

It belongs to the class-III pyridoxal-phosphate-dependent aminotransferase family. ArgD subfamily. As to quaternary structure, homodimer. Requires pyridoxal 5'-phosphate as cofactor.

It localises to the cytoplasm. It carries out the reaction N(2)-acetyl-L-ornithine + 2-oxoglutarate = N-acetyl-L-glutamate 5-semialdehyde + L-glutamate. The catalysed reaction is N-succinyl-(2S,6S)-2,6-diaminopimelate + 2-oxoglutarate = (S)-2-succinylamino-6-oxoheptanedioate + L-glutamate. The protein operates within amino-acid biosynthesis; L-arginine biosynthesis; N(2)-acetyl-L-ornithine from L-glutamate: step 4/4. Its pathway is amino-acid biosynthesis; L-lysine biosynthesis via DAP pathway; LL-2,6-diaminopimelate from (S)-tetrahydrodipicolinate (succinylase route): step 2/3. In terms of biological role, involved in both the arginine and lysine biosynthetic pathways. This Escherichia coli O157:H7 protein is Acetylornithine/succinyldiaminopimelate aminotransferase.